Consider the following 845-residue polypeptide: P protein (845 aa).

Residues 1–57 are disordered; sequence MRLENREGRPTSGVLEMELPQASAPSRAGLGSLGLVGLDSSNHRPQQGGSKAGSRGP. Topologically, residues 1–183 are extracellular; that stretch reads MRLENREGRP…HLSKLRCCVQ (183 aa). Low complexity predominate over residues 26–40; the sequence is SRAGLGSLGLVGLDS. The chain crosses the membrane as a helical span at residues 184–204; that stretch reads WLKVSGLFVFVVLCSILFSLY. The Cytoplasmic portion of the chain corresponds to 205 to 337; sequence PDQGKFWQLL…QYLRASIEAQ (133 aa). The chain crosses the membrane as a helical span at residues 338-358; it reads VTIAAVILAGVYVLIIFEIVH. The Extracellular segment spans residues 359 to 360; it reads RT. Residues 361 to 381 form a helical membrane-spanning segment; it reads LAAMLGSLAALAALAVIGDRP. Topologically, residues 382 to 393 are cytoplasmic; it reads TLTQVVEWIDFE. The chain crosses the membrane as a helical span at residues 394-414; sequence TLALLFGMMILVAIFSETGFF. Residues 415-429 are Extracellular-facing; sequence DYCAVKAYQLSRGRV. A helical membrane pass occupies residues 430–450; it reads WAMIIMLCLIAAVLSAFLDNV. Over 451-513 the chain is Cytoplasmic; sequence TTALLFTPVT…ELRKMGLDFA (63 aa). A helical transmembrane segment spans residues 514-534; it reads GFTAHMFAGICFVLLFSFPLL. At 535 to 629 the chain is on the extracellular side; the sequence is RLLYWNRKLY…KKHRISDRTL (95 aa). Residues 630-650 form a helical membrane-spanning segment; the sequence is LTKCVTVLGLVIFMFFLNSFV. A topological domain (cytoplasmic) is located at residue Pro-651. A helical membrane pass occupies residues 652-672; the sequence is GVHLDLGWIAILGAIWLLILA. Residues 673 to 687 are Extracellular-facing; it reads DIHDFEIILHRVEWA. The helical transmembrane segment at 688–708 threads the bilayer; that stretch reads TLLFFAALFILMEALAHLHLI. Over 709–730 the chain is Cytoplasmic; it reads EYVGEQTALLIKMVPEDQRLAA. Residues 731 to 751 traverse the membrane as a helical segment; the sequence is AIIVVVWVSAIASSLIDNIPF. Over 752-773 the chain is Extracellular; sequence TATMIPVLLNLSRDPEISLPAP. Residues 774 to 794 traverse the membrane as a helical segment; it reads PLMYALALGACLGGNGTLIGA. At 795-820 the chain is on the cytoplasmic side; sequence SANVVCAGIAEQHGYGFSFMEFFRLG. The helical transmembrane segment at 821–841 threads the bilayer; it reads FPMMVVSCMVGMCYLLVAHVV. The Extracellular segment spans residues 842–845; that stretch reads MGWN.

Belongs to the CitM (TC 2.A.11) transporter family.

Its subcellular location is the melanosome membrane. The catalysed reaction is chloride(in) = chloride(out). In terms of biological role, contributes to a melanosome-specific anion (chloride) current that modulates melanosomal pH for optimal tyrosinase activity required for melanogenesis and the melanosome maturation. One of the components of the mammalian pigmentary system. May serve as a key control point at which ethnic skin color variation is determined. Major determinant of brown and/or blue eye color. Seems to regulate the post-translational processing of tyrosinase, which catalyzes the limiting reaction in melanin synthesis. The polypeptide is P protein (Oca2) (Sus scrofa (Pig)).